The following is a 371-amino-acid chain: 4-hydroxyphenylpyruvate dioxygenase-like protein (371 aa).

2 VOC domains span residues 7 to 135 and 160 to 328; these read RLCH…LLER and RVDH…VFTK. 3 residues coordinate Fe cation: His-163, His-258, and Glu-339.

This sequence belongs to the 4HPPD family. Requires Fe cation as cofactor.

Its subcellular location is the mitochondrion. The catalysed reaction is 3-(4-hydroxyphenyl)pyruvate + O2 = (S)-4-hydroxymandelate + CO2. In terms of biological role, iron-dependent dioxygenase that catalyzes the conversion of 4-hydroxyphenylpyruvate (4-HPPA) to 4-hydroxymandelate (4-HMA) in the mitochondria, one of the steps in the biosynthesis of coenzyme Q10 from tyrosine. The sequence is that of 4-hydroxyphenylpyruvate dioxygenase-like protein from Homo sapiens (Human).